The chain runs to 373 residues: 3 beta-hydroxysteroid dehydrogenase/Delta 5--&gt;4-isomerase type 1 (373 aa).

Residues 10–15 (GAGGFV), tyrosine 155, and lysine 159 each bind NADP(+). The active-site Proton donor is lysine 159. The helical transmembrane segment at 288–308 (LPLLYWLAFLLETVSFLLRPV) threads the bilayer.

It belongs to the 3-beta-HSD family. As to expression, steroidogenic tissues (includes testes, ovaries and adrenal glands).

Its subcellular location is the endoplasmic reticulum membrane. It localises to the mitochondrion membrane. The catalysed reaction is a 3beta-hydroxy-Delta(5)-steroid + NAD(+) = a 3-oxo-Delta(5)-steroid + NADH + H(+). It carries out the reaction pregnenolone + NAD(+) = pregn-5-ene-3,20-dione + NADH + H(+). The enzyme catalyses 3beta-hydroxyandrost-5-en-17-one + NAD(+) = androst-5-ene-3,17-dione + NADH + H(+). It catalyses the reaction androst-5-en-3beta,17beta-diol + NAD(+) = 17beta-hydroxy-androst-5-en-3-one + NADH + H(+). The catalysed reaction is a 3beta-hydroxysteroid + NADP(+) = a 3-oxosteroid + NADPH + H(+). It carries out the reaction 5alpha-androstane-3beta,17beta-diol + NADP(+) = 17beta-hydroxy-5alpha-androstan-3-one + NADPH + H(+). The enzyme catalyses 3beta-hydroxy-5alpha-androstan-17-one + NADP(+) = 5alpha-androstan-3,17-dione + NADPH + H(+). It catalyses the reaction a 3-oxo-Delta(5)-steroid = a 3-oxo-Delta(4)-steroid. The catalysed reaction is pregn-5-ene-3,20-dione = progesterone. It carries out the reaction androst-5-ene-3,17-dione = androst-4-ene-3,17-dione. The enzyme catalyses 17beta-hydroxy-androst-5-en-3-one = testosterone. It catalyses the reaction 5alpha-androstane-3beta,17beta-diol + NAD(+) = 17beta-hydroxy-5alpha-androstan-3-one + NADH + H(+). Its pathway is steroid hormone biosynthesis. The protein operates within steroid metabolism. Its function is as follows. A bifunctional enzyme responsible for the oxidation and isomerization of 3beta-hydroxy-Delta(5)-steroid precursors to 3-oxo-Delta(4)-steroids, an essential step in steroid hormone biosynthesis. Specifically catalyzes the conversion of pregnenolone to progesterone, 17alpha-hydroxypregnenolone to 17alpha-hydroxyprogesterone, dehydroepiandrosterone (DHEA) to 4-androstenedione, and androstenediol to testosterone. Additionally, catalyzes the interconversion between 3beta-hydroxy and 3-oxo-5alpha-androstane steroids controlling the bioavalability of the active forms. Specifically converts dihydrotestosterone to its inactive form 5alpha-androstanediol, that does not bind androgen receptor/AR. Also converts androstanedione, a precursor of testosterone and estrone, to epiandrosterone. Expected to use NAD(+) as preferred electron donor for the 3-beta-hydroxy-steroid dehydrogenase activity and NADPH for the 3-ketosteroid reductase activity. The sequence is that of 3 beta-hydroxysteroid dehydrogenase/Delta 5--&gt;4-isomerase type 1 from Mus musculus (Mouse).